Here is a 360-residue protein sequence, read N- to C-terminus: NAD(P)H-quinone oxidoreductase subunit 1, chloroplastic (360 aa).

9 consecutive transmembrane segments (helical) span residues 27-47 (IWIF…VLVI), 98-118 (FSIG…VIPF), 129-149 (IGIF…LMSG), 165-185 (AAQS…ISLL), 203-223 (FWGW…ISSL), 248-268 (YSGI…LISS), 269-289 (LFVT…ISIL), 297-317 (IFGT…FLFI), and 340-360 (FLLP…LFSL).

This sequence belongs to the complex I subunit 1 family. NDH is composed of at least 16 different subunits, 5 of which are encoded in the nucleus.

Its subcellular location is the plastid. It localises to the chloroplast thylakoid membrane. The catalysed reaction is a plastoquinone + NADH + (n+1) H(+)(in) = a plastoquinol + NAD(+) + n H(+)(out). It carries out the reaction a plastoquinone + NADPH + (n+1) H(+)(in) = a plastoquinol + NADP(+) + n H(+)(out). Its function is as follows. NDH shuttles electrons from NAD(P)H:plastoquinone, via FMN and iron-sulfur (Fe-S) centers, to quinones in the photosynthetic chain and possibly in a chloroplast respiratory chain. The immediate electron acceptor for the enzyme in this species is believed to be plastoquinone. Couples the redox reaction to proton translocation, and thus conserves the redox energy in a proton gradient. In Barbarea verna (Land cress), this protein is NAD(P)H-quinone oxidoreductase subunit 1, chloroplastic.